Here is a 352-residue protein sequence, read N- to C-terminus: Threonine synthase (352 aa).

At Lys59 the chain carries N6-(pyridoxal phosphate)lysine. Residues Asn85, 185–189 (GNAGN), and Thr314 contribute to the pyridoxal 5'-phosphate site.

It belongs to the threonine synthase family. The cofactor is pyridoxal 5'-phosphate.

The catalysed reaction is O-phospho-L-homoserine + H2O = L-threonine + phosphate. The protein operates within amino-acid biosynthesis; L-threonine biosynthesis; L-threonine from L-aspartate: step 5/5. In terms of biological role, catalyzes the gamma-elimination of phosphate from L-phosphohomoserine and the beta-addition of water to produce L-threonine. The chain is Threonine synthase (thrC) from Bacillus subtilis (strain 168).